Consider the following 273-residue polypeptide: ATP synthase subunit delta (273 aa).

Positions 55-78 are disordered; that stretch reads TDPAQSARPRPSSPSVSSAPRSAA. Low complexity predominate over residues 57-78; the sequence is PAQSARPRPSSPSVSSAPRSAA.

It belongs to the ATPase delta chain family. As to quaternary structure, F-type ATPases have 2 components, F(1) - the catalytic core - and F(0) - the membrane proton channel. F(1) has five subunits: alpha(3), beta(3), gamma(1), delta(1), epsilon(1). F(0) has three main subunits: a(1), b(2) and c(10-14). The alpha and beta chains form an alternating ring which encloses part of the gamma chain. F(1) is attached to F(0) by a central stalk formed by the gamma and epsilon chains, while a peripheral stalk is formed by the delta and b chains.

It localises to the cell membrane. F(1)F(0) ATP synthase produces ATP from ADP in the presence of a proton or sodium gradient. F-type ATPases consist of two structural domains, F(1) containing the extramembraneous catalytic core and F(0) containing the membrane proton channel, linked together by a central stalk and a peripheral stalk. During catalysis, ATP synthesis in the catalytic domain of F(1) is coupled via a rotary mechanism of the central stalk subunits to proton translocation. Functionally, this protein is part of the stalk that links CF(0) to CF(1). It either transmits conformational changes from CF(0) to CF(1) or is implicated in proton conduction. In Streptomyces lividans, this protein is ATP synthase subunit delta.